The chain runs to 208 residues: Heart- and neural crest derivatives-expressed protein 2 (208 aa).

Disordered regions lie at residues 79 to 106 and 161 to 197; these read AGAV…TQSI and EFKK…RTGW. Residues 88-103 show a composition bias toward basic residues; it reads TVKRRPTANRKERRRT. The 53-residue stretch at 90–142 folds into the bHLH domain; it reads KRRPTANRKERRRTQSINSAFAELRECIPNVPADTKLSKIKTLRLATSYIAYL. Residues 161-178 show a composition bias toward basic and acidic residues; it reads EFKKTDAKEERRKKEMND.

As to quaternary structure, efficient DNA binding requires dimerization with another bHLH protein.

The protein resides in the nucleus. In terms of biological role, essential for myocardial and pectoral fin differentiation, patterning and morphogenesis. This chain is Heart- and neural crest derivatives-expressed protein 2 (hand2), found in Danio rerio (Zebrafish).